A 146-amino-acid polypeptide reads, in one-letter code: MLTINSIKNGIVIDHIKAGHGIKIYNYLKLGEAEFPTALIMNAISKKNKAKDIIKIENVMDLDLAVLGFLDPNITVNIIEDEKIRQKIQLKLPSEVNNIIKCSNPRCVTSVESYIPHKFKLVDEEKGEYKCEYCDEIYKGAKALEI.

Zn(2+)-binding residues include cysteine 102, cysteine 107, cysteine 131, and cysteine 134.

This sequence belongs to the PyrI family. As to quaternary structure, contains catalytic and regulatory chains. Requires Zn(2+) as cofactor.

Functionally, involved in allosteric regulation of aspartate carbamoyltransferase. In Clostridium acetobutylicum (strain ATCC 824 / DSM 792 / JCM 1419 / IAM 19013 / LMG 5710 / NBRC 13948 / NRRL B-527 / VKM B-1787 / 2291 / W), this protein is Aspartate carbamoyltransferase regulatory chain.